Consider the following 255-residue polypeptide: MQINTIPVNPTLPRHIAIIMDGNGRWAERRSRPRTTGHRAGVKAAMRTVDFCLEKGIKMLTLFAFSSENWNRPADEVNFLMEMSIKLFGRGIEELHRRGVQVRFIGERKRFDIALVEHMTKAEHLTASNQRLILSLAVSYGGRQDITMAARALAQDVAAGRLKPEQIDEDLLGQHMALADLPPPDMFIRTSGVIRISNFLLWQIAYTELWFTDVMWPEFNSTVLQQALDDYASRERRFGLTNAQIASRGKGSIPA.

Asp-21 is a catalytic residue. Asp-21 serves as a coordination point for Mg(2+). Substrate contacts are provided by residues 22 to 25, Trp-26, Arg-34, His-38, and 66 to 68; these read GNGR and SSE. The Proton acceptor role is filled by Asn-69. Substrate is bound by residues Trp-70, Arg-72, Arg-189, and 195–197; that span reads RIS. Glu-208 is a Mg(2+) binding site.

Belongs to the UPP synthase family. In terms of assembly, homodimer. Requires Mg(2+) as cofactor.

The enzyme catalyses 8 isopentenyl diphosphate + (2E,6E)-farnesyl diphosphate = di-trans,octa-cis-undecaprenyl diphosphate + 8 diphosphate. Its function is as follows. Catalyzes the sequential condensation of isopentenyl diphosphate (IPP) with (2E,6E)-farnesyl diphosphate (E,E-FPP) to yield (2Z,6Z,10Z,14Z,18Z,22Z,26Z,30Z,34E,38E)-undecaprenyl diphosphate (di-trans,octa-cis-UPP). UPP is the precursor of glycosyl carrier lipid in the biosynthesis of bacterial cell wall polysaccharide components such as peptidoglycan and lipopolysaccharide. This is Ditrans,polycis-undecaprenyl-diphosphate synthase ((2E,6E)-farnesyl-diphosphate specific) from Xylella fastidiosa (strain Temecula1 / ATCC 700964).